The chain runs to 216 residues: Somatotropin (216 aa).

The N-terminal stretch at 1–26 (MAADSQTPWLLTFSLLCLLWPQEAGA) is a signal peptide. His-45 contacts Zn(2+). The cysteines at positions 78 and 189 are disulfide-linked. Residue Ser-131 is modified to Phosphoserine. A Zn(2+)-binding site is contributed by Glu-198. Cysteines 206 and 214 form a disulfide.

It belongs to the somatotropin/prolactin family.

The protein resides in the secreted. Functionally, plays an important role in growth control. Its major role in stimulating body growth is to stimulate the liver and other tissues to secrete IGF1. It stimulates both the differentiation and proliferation of myoblasts. It also stimulates amino acid uptake and protein synthesis in muscle and other tissues. This Rattus norvegicus (Rat) protein is Somatotropin (Gh1).